The sequence spans 142 residues: Large ribosomal subunit protein uL13 (142 aa).

The protein belongs to the universal ribosomal protein uL13 family. In terms of assembly, part of the 50S ribosomal subunit.

Functionally, this protein is one of the early assembly proteins of the 50S ribosomal subunit, although it is not seen to bind rRNA by itself. It is important during the early stages of 50S assembly. The sequence is that of Large ribosomal subunit protein uL13 from Shewanella putrefaciens (strain CN-32 / ATCC BAA-453).